A 99-amino-acid chain; its full sequence is Small ribosomal subunit protein bS21 (99 aa).

Positions Lys-60–Arg-99 are disordered.

The protein belongs to the bacterial ribosomal protein bS21 family.

The sequence is that of Small ribosomal subunit protein bS21 from Rhodopseudomonas palustris (strain BisA53).